Here is an 803-residue protein sequence, read N- to C-terminus: Bromodomain-containing protein 2 (803 aa).

Residue methionine 1 is modified to N-acetylmethionine. Threonine 6 carries the phosphothreonine modification. Serine 37 carries the phosphoserine modification. Positions 53-73 are disordered; sequence ALQLTPANPPPPEVSNPKKPG. A Bromo 1 domain is found at 74-180; that stretch reads RVTNQLQYLH…KIFLQKVASM (107 aa). A protein-binding residues include aspartate 112, tyrosine 155, asparagine 156, lysine 157, aspartate 160, and aspartate 161. Disordered regions lie at residues 268–348, 456–652, and 739–803; these read PPAQ…KLSE, EPLE…KRQL, and EKRL…SDSG. Residues 285 to 298 show a composition bias toward low complexity; it reads TTTPTPTAILAPGS. A phosphoserine mark is found at serine 298 and serine 301. Over residues 316–332 the composition is skewed to basic and acidic residues; it reads VRRESGRPIKPPRKDLP. In terms of domain architecture, Bromo 2 spans 344-453; the sequence is GKLSEQLKHC…DVFEFRYAKM (110 aa). Over residues 481 to 515 the composition is skewed to acidic residues; sequence SSEESSSESSSEEEEEEDEDEEEEEEESESSDSEE. The span at 545-567 shows a compositional bias: basic residues; that stretch reads KPKRKREKKEKKKKRKAEKHRGR. Residues 556–560 carry the Nuclear localization signal motif; the sequence is KKKRK. Low complexity predominate over residues 623-632; sequence KTAPPALPAG. Positions 634 to 716 constitute an NET domain; the sequence is DSEEEEESRP…SCLRKKPRKP (83 aa). Phosphoserine is present on serine 635. Positions 641 to 652 are enriched in basic and acidic residues; sequence SRPMSYDEKRQL. The span at 777–797 shows a compositional bias: low complexity; it reads SASSSSSDSSSSSSSSSSSDT.

This sequence belongs to the BET family. In terms of assembly, homodimer. Interacts with E2F1. Interacts with (acetylated) STAT3; promoting STAT3 recruitment to chromatin. Interacts with CTCF; promoting BRD2 recruitment to chromatin.

It localises to the nucleus. Its subcellular location is the chromosome. Functionally, chromatin reader protein that specifically recognizes and binds histone H4 acetylated at 'Lys-5' and 'Lys-12' (H4K5ac and H4K12ac, respectively), thereby controlling gene expression and remodeling chromatin structures. Recruits transcription factors and coactivators to target gene sites, and activates RNA polymerase II machinery for transcriptional elongation. Plays a key role in genome compartmentalization via its association with CTCF and cohesin: recruited to chromatin by CTCF and promotes formation of topologically associating domains (TADs) via its ability to bind acetylated histones, contributing to CTCF boundary formation and enhancer insulation. Also recognizes and binds acetylated non-histone proteins, such as STAT3. Involved in inflammatory response by regulating differentiation of naive CD4(+) T-cells into T-helper Th17: recognizes and binds STAT3 acetylated at 'Lys-87', promoting STAT3 recruitment to chromatin. In addition to acetylated lysines, also recognizes and binds lysine residues on histones that are both methylated and acetylated on the same side chain to form N6-acetyl-N6-methyllysine (Kacme), an epigenetic mark of active chromatin associated with increased transcriptional initiation. Specifically binds histone H4 acetyl-methylated at 'Lys-5' and 'Lys-12' (H4K5acme and H4K12acme, respectively). This is Bromodomain-containing protein 2 (BRD2) from Bos taurus (Bovine).